Here is an 86-residue protein sequence, read N- to C-terminus: Small ribosomal subunit protein uS17 (86 aa).

It belongs to the universal ribosomal protein uS17 family. As to quaternary structure, part of the 30S ribosomal subunit.

Functionally, one of the primary rRNA binding proteins, it binds specifically to the 5'-end of 16S ribosomal RNA. The protein is Small ribosomal subunit protein uS17 of Streptococcus gordonii (strain Challis / ATCC 35105 / BCRC 15272 / CH1 / DL1 / V288).